The following is a 110-amino-acid chain: Protein YcgL (110 aa).

Residues 14-98 (MFCVIYRSSK…PPEDLLKQHL (85 aa)) form the YcgL domain. The interval 88-110 (PPPEDLLKQHLSSVGQNTSHADR) is disordered. Positions 97–110 (HLSSVGQNTSHADR) are enriched in polar residues.

This is Protein YcgL from Salmonella schwarzengrund (strain CVM19633).